Here is an 89-residue protein sequence, read N- to C-terminus: Large ribosomal subunit protein bL27 (89 aa).

Residues 1–21 (MAHKKAGGSSRNGRDSKGKRL) are disordered.

This sequence belongs to the bacterial ribosomal protein bL27 family.

This Bradyrhizobium sp. (strain BTAi1 / ATCC BAA-1182) protein is Large ribosomal subunit protein bL27.